The chain runs to 274 residues: Purine nucleoside phosphorylase YlmD (274 aa).

An inosine-binding site is contributed by 46–47 (LH). The Zn(2+) site is built by His-80, Cys-125, His-142, Cys-182, Cys-183, Cys-242, and Cys-245. Arg-262 serves as a coordination point for inosine.

It belongs to the purine nucleoside phosphorylase YfiH/LACC1 family. Zn(2+) is required as a cofactor.

It carries out the reaction adenosine + phosphate = alpha-D-ribose 1-phosphate + adenine. The enzyme catalyses S-methyl-5'-thioadenosine + phosphate = 5-(methylsulfanyl)-alpha-D-ribose 1-phosphate + adenine. It catalyses the reaction inosine + phosphate = alpha-D-ribose 1-phosphate + hypoxanthine. The catalysed reaction is adenosine + H2O + H(+) = inosine + NH4(+). Purine nucleoside enzyme that catalyzes the phosphorolysis of adenosine and inosine nucleosides, yielding D-ribose 1-phosphate and the respective free bases, adenine and hypoxanthine. Also catalyzes the phosphorolysis of S-methyl-5'-thioadenosine into adenine and S-methyl-5-thio-alpha-D-ribose 1-phosphate. Also has adenosine deaminase activity. In Geobacillus stearothermophilus (strain DSM 13240 / CIP 106956 / 10), this protein is Purine nucleoside phosphorylase YlmD.